Reading from the N-terminus, the 331-residue chain is UPF0194 membrane protein CKO_02332 (331 aa).

An N-terminal signal peptide occupies residues 1–15; sequence MKKPVVIALAVAALA. The stretch at 142-207 forms a coiled coil; the sequence is ISANDLENAR…ELDLQDTTLI (66 aa).

The protein belongs to the UPF0194 family.

Its subcellular location is the periplasm. In Citrobacter koseri (strain ATCC BAA-895 / CDC 4225-83 / SGSC4696), this protein is UPF0194 membrane protein CKO_02332.